We begin with the raw amino-acid sequence, 206 residues long: Ribosomal RNA small subunit methyltransferase G (206 aa).

Residues G74, L79, 125–126, and R140 each bind S-adenosyl-L-methionine; that span reads VE.

The protein belongs to the methyltransferase superfamily. RNA methyltransferase RsmG family.

Its subcellular location is the cytoplasm. It carries out the reaction guanosine(527) in 16S rRNA + S-adenosyl-L-methionine = N(7)-methylguanosine(527) in 16S rRNA + S-adenosyl-L-homocysteine. Its function is as follows. Specifically methylates the N7 position of guanine in position 527 of 16S rRNA. This chain is Ribosomal RNA small subunit methyltransferase G, found in Shewanella woodyi (strain ATCC 51908 / MS32).